A 237-amino-acid chain; its full sequence is 7-cyano-7-deazaguanine synthase (237 aa).

An ATP-binding site is contributed by 10-20 (FSGGQDSTTCL). 4 residues coordinate Zn(2+): C189, C198, C201, and C204.

Belongs to the QueC family. The cofactor is Zn(2+).

It catalyses the reaction 7-carboxy-7-deazaguanine + NH4(+) + ATP = 7-cyano-7-deazaguanine + ADP + phosphate + H2O + H(+). It functions in the pathway purine metabolism; 7-cyano-7-deazaguanine biosynthesis. Catalyzes the ATP-dependent conversion of 7-carboxy-7-deazaguanine (CDG) to 7-cyano-7-deazaguanine (preQ(0)). In Aeromonas salmonicida (strain A449), this protein is 7-cyano-7-deazaguanine synthase.